The chain runs to 117 residues: Large ribosomal subunit protein uL18 (117 aa).

This sequence belongs to the universal ribosomal protein uL18 family. As to quaternary structure, part of the 50S ribosomal subunit; part of the 5S rRNA/L5/L18/L25 subcomplex. Contacts the 5S and 23S rRNAs.

Functionally, this is one of the proteins that bind and probably mediate the attachment of the 5S RNA into the large ribosomal subunit, where it forms part of the central protuberance. This is Large ribosomal subunit protein uL18 from Edwardsiella ictaluri (strain 93-146).